Reading from the N-terminus, the 202-residue chain is CASP-like protein 2B1 (202 aa).

Topologically, residues 1–29 (MSYLGVGVSPGNVPVYHGSNLKVIDKRVR) are cytoplasmic. A helical membrane pass occupies residues 30–50 (LAELVLRCLICGLGVLAAVLV). Residues 51–72 (GTDTQVKEIFSIQKKARFTDMK) are Extracellular-facing. A helical membrane pass occupies residues 73-93 (ALVFLVIANGIAAAYSLLQGV). Over 94 to 109 (RCVVGMVRGSALFSKP) the chain is Cytoplasmic. Residues 110–130 (LAWAIFSGDQMMAYLTVAAVA) form a helical membrane-spanning segment. The Extracellular portion of the chain corresponds to 131–164 (AAAQSAVFAKLGQPELQWMKICNMYGKFCNQVGE). A helical transmembrane segment spans residues 165–185 (GIASALLVSVSMVVLSCISAF). Over 186–202 (SLFRLYGANKGKDCTRW) the chain is Cytoplasmic.

This sequence belongs to the Casparian strip membrane proteins (CASP) family. Homodimer and heterodimers.

The protein localises to the cell membrane. In Ricinus communis (Castor bean), this protein is CASP-like protein 2B1.